The chain runs to 339 residues: Phenylalanine--tRNA ligase alpha subunit (339 aa).

Glutamate 253 lines the Mg(2+) pocket.

It belongs to the class-II aminoacyl-tRNA synthetase family. Phe-tRNA synthetase alpha subunit type 1 subfamily. As to quaternary structure, tetramer of two alpha and two beta subunits. Requires Mg(2+) as cofactor.

It is found in the cytoplasm. It catalyses the reaction tRNA(Phe) + L-phenylalanine + ATP = L-phenylalanyl-tRNA(Phe) + AMP + diphosphate + H(+). The chain is Phenylalanine--tRNA ligase alpha subunit from Alcanivorax borkumensis (strain ATCC 700651 / DSM 11573 / NCIMB 13689 / SK2).